A 508-amino-acid chain; its full sequence is Glycerol kinase (508 aa).

Position 14 (Thr-14) interacts with ADP. Positions 14, 15, and 16 each coordinate ATP. Thr-14 contacts sn-glycerol 3-phosphate. Arg-18 contacts ADP. Sn-glycerol 3-phosphate is bound by residues Arg-84, Glu-85, Tyr-136, and Asp-245. Glycerol is bound by residues Arg-84, Glu-85, Tyr-136, Asp-245, and Gln-246. ADP contacts are provided by Thr-267 and Gly-314. Residues Thr-267, Gly-314, and Gln-318 each coordinate ATP. ADP is bound at residue Asn-419.

The protein belongs to the FGGY kinase family.

It carries out the reaction glycerol + ATP = sn-glycerol 3-phosphate + ADP + H(+). It participates in polyol metabolism; glycerol degradation via glycerol kinase pathway; sn-glycerol 3-phosphate from glycerol: step 1/1. Its activity is regulated as follows. Inhibited by fructose 1,6-bisphosphate (FBP). Functionally, key enzyme in the regulation of glycerol uptake and metabolism. Catalyzes the phosphorylation of glycerol to yield sn-glycerol 3-phosphate. The chain is Glycerol kinase from Bordetella pertussis (strain Tohama I / ATCC BAA-589 / NCTC 13251).